The sequence spans 407 residues: Tryptophan synthase beta chain (407 aa).

The residue at position 86 (Lys86) is an N6-(pyridoxal phosphate)lysine.

This sequence belongs to the TrpB family. As to quaternary structure, tetramer of two alpha and two beta chains. Pyridoxal 5'-phosphate serves as cofactor.

The enzyme catalyses (1S,2R)-1-C-(indol-3-yl)glycerol 3-phosphate + L-serine = D-glyceraldehyde 3-phosphate + L-tryptophan + H2O. The protein operates within amino-acid biosynthesis; L-tryptophan biosynthesis; L-tryptophan from chorismate: step 5/5. Its function is as follows. The beta subunit is responsible for the synthesis of L-tryptophan from indole and L-serine. This chain is Tryptophan synthase beta chain, found in Shewanella woodyi (strain ATCC 51908 / MS32).